A 491-amino-acid chain; its full sequence is Homeobox protein unplugged (491 aa).

4 disordered regions span residues 1–23, 46–69, 124–146, and 227–329; these read MERP…TKTT, SASA…QEQE, AGKE…PLPH, and FSPA…RRTA. Positions 254–264 are enriched in polar residues; it reads GDSSSDISLTL. Over residues 305–316 the composition is skewed to gly residues; the sequence is GLGGKDSQGNGS. The homeobox DNA-binding region spans 323–382; it reads SRRRRTAFTSEQLLELEREFHAKKYLSLTERSQIATSLKLSEVQVKIWFQNRRAKWKRVK.

The protein localises to the nucleus. Functionally, plays a regulatory role in neural branching of the tracheae: segment-specific aspects of these neural branching patterns appear to be generated by homeotic regulation of expression. This Drosophila pseudoobscura pseudoobscura (Fruit fly) protein is Homeobox protein unplugged.